A 330-amino-acid chain; its full sequence is Probable cytosolic iron-sulfur protein assembly protein ciao1-A (330 aa).

7 WD repeats span residues 14 to 53 (HPDSRCWYVAWNPKGTLLASCGGDRAIRIWGREGDSWECK), 59 to 98 (GHQRAVRKVAWSPCGNYLASASFDATTCIWKKKNDDFECL), 103 to 142 (GHENEVKCVAWAPSGNQLATCSRDKSVWIWEVDEEDEYEC), 148 to 187 (SHTQDVKHVVWHPTQELLASCSYDNNVCVYKEEDDDWECR), 192 to 231 (GHTSTVWGLTFDPSGQRLASCSDDRTVKIWKECQPGGGQD), 243 to 282 (FHGRTVYDIAWCPLTGALATACGDDGVRVFKEDETADPDQ), and 294 to 330 (AHSQDVNCIAWHPKEAGLLVSCSDNGEIAVWNYQSEV).

It belongs to the WD repeat CIA1 family. As to quaternary structure, component of the CIA complex.

In terms of biological role, key component of the cytosolic iron-sulfur protein assembly (CIA) complex, a multiprotein complex that mediates the incorporation of iron-sulfur cluster into extramitochondrial Fe/S proteins. This is Probable cytosolic iron-sulfur protein assembly protein ciao1-A (ciao1a) from Salmo salar (Atlantic salmon).